We begin with the raw amino-acid sequence, 404 residues long: Zinc finger TRAF-type-containing protein 1 (404 aa).

Residues 1–13 (MSGAEEAGGGGPA) show a composition bias toward gly residues. Residues 1–22 (MSGAEEAGGGGPAAGPAGSVPA) are disordered. An RING-type; degenerate zinc finger spans residues 111-156 (CTVCLDLPKASVYQCTNGHLMCAGCFIHLLADARLKEEQATCPNCR). Residues 152-225 (CPNCRCEISK…PWHGPFHELT (74 aa)) form a TRAF-type zinc finger.

The protein belongs to the ZFTRAF1 family. As to quaternary structure, interacts with LGALS3.

The protein localises to the cytoplasm. It is found in the perinuclear region. In Homo sapiens (Human), this protein is Zinc finger TRAF-type-containing protein 1.